The sequence spans 204 residues: ATP synthase subunit 4, mitochondrial (204 aa).

Helical transmembrane passes span Gly-27–Val-47 and Ile-52–Tyr-72.

F-type ATP synthases have 2 components, the catalytic core F(1) and the membrane-embedded component F(0), linked together by a central stalk and a peripheral stalk. The central stalk, also called rotor shaft, is often seen as part of F(1). The peripheral stalk is seen as part of F(0). F(0) contains the membrane channel next to the rotor. F-type ATP synthases form dimers but each monomer functions independently in ATP generation. The dimer consists of 18 different polypeptides: ATP1 (subunit alpha, part of F(1), 3 molecules per monomer), ATP2 (subunit beta, part of F(1), 3 molecules per monomer), ATP3 (subunit gamma, part of the central stalk), ATP4 (subunit b, part of the peripheral stalk), ATP5/OSCP (subunit 5/OSCP, part of the peripheral stalk), ATP6 (subunit a, part of the peripheral stalk), ATP7 (subunit d, part of the peripheral stalk), ATP8 (subunit 8, part of the peripheral stalk), OLI1 (subunit c, part of the rotor, 10 molecules per monomer), ATP14 (subunit h, part of the peripheral stalk), ATP15 (subunit epsilon, part of the central stalk), ATP16 (subunit delta, part of the central stalk), ATP17 (subunit f, part of the peripheral stalk), ATP18 (subunit i/j, part of the peripheral stalk). Dimer-specific subunits are ATP19 (subunit k, at interface between monomers), ATP20 (subunit g, at interface between monomers), TIM11 (subunit e, at interface between monomers). Also contains subunit L.

Its subcellular location is the mitochondrion inner membrane. Its function is as follows. Mitochondrial membrane ATP synthase (F(1)F(0) ATP synthase or Complex V) produces ATP from ADP in the presence of a proton gradient across the membrane which is generated by electron transport complexes of the respiratory chain. F-type ATP synthases consist of two structural domains, F(1) - containing the extramembraneous catalytic core, and F(0) - containing the membrane proton channel, linked together by a central stalk and a peripheral stalk. During catalysis, ATP synthesis in the catalytic domain of F(1) is coupled via a rotary mechanism of the central stalk subunits to proton translocation. Part of the complex F(0) domain and the peripheral stalk, which acts as a stator to hold the catalytic alpha/ATP1(3)beta/ATP2(3) subcomplex and subunit a/ATP6 static relative to the rotary elements. The protein is ATP synthase subunit 4, mitochondrial of Pichia angusta (Yeast).